The chain runs to 282 residues: Probable endonuclease 4 (282 aa).

9 residues coordinate Zn(2+): His66, His106, Glu143, Asp176, His179, His213, Asp226, His228, and Glu258.

This sequence belongs to the AP endonuclease 2 family. Zn(2+) is required as a cofactor.

The catalysed reaction is Endonucleolytic cleavage to 5'-phosphooligonucleotide end-products.. Functionally, endonuclease IV plays a role in DNA repair. It cleaves phosphodiester bonds at apurinic or apyrimidinic (AP) sites, generating a 3'-hydroxyl group and a 5'-terminal sugar phosphate. The sequence is that of Probable endonuclease 4 from Aquifex aeolicus (strain VF5).